Here is a 133-residue protein sequence, read N- to C-terminus: Adenosine 5'-monophosphoramidase hnt1 (133 aa).

The HIT domain occupies 4–107 (IFCKIVKGDI…IPKPNEEYGL (104 aa)). AMP contacts are provided by residues 29-30 (DI), N81, 87-89 (HQF), and 94-96 (HFH). The short motif at 92 to 96 (HVHFH) is the Histidine triad motif element. The active-site Tele-AMP-histidine intermediate is the H94.

Belongs to the HINT family. As to quaternary structure, homodimer. Mg(2+) is required as a cofactor.

It is found in the nucleus. It catalyses the reaction adenosine 5'-phosphoramidate + H2O = AMP + NH4(+). Its function is as follows. Hydrolyzes adenosine 5'-monophosphoramidate substrates such as AMP-morpholidate, AMP-N-alanine methyl ester, AMP-alpha-acetyl lysine methyl ester and AMP-NH2. This chain is Adenosine 5'-monophosphoramidase hnt1 (hnt1), found in Schizosaccharomyces pombe (strain 972 / ATCC 24843) (Fission yeast).